The chain runs to 244 residues: EKC/KEOPS complex subunit Tp53rkb (244 aa).

The 221-residue stretch at 24–244 (LSGLELVQQG…LRGRKRSMVG (221 aa)) folds into the Protein kinase domain. Ser25 is modified (phosphoserine). ATP-binding positions include 30–38 (VQQGAEARV) and Lys51. The Nuclear localization signal signature appears at 69–86 (RRRTVQEARALLRCRRAG). The active-site Proton acceptor is Asp153.

Belongs to the protein kinase superfamily. BUD32 family. As to quaternary structure, component of the EKC/KEOPS complex composed of at least GON7, TP53RK, TPRKB, OSGEP and LAGE3; the whole complex dimerizes.

Its subcellular location is the nucleus. The catalysed reaction is L-seryl-[protein] + ATP = O-phospho-L-seryl-[protein] + ADP + H(+). It carries out the reaction L-threonyl-[protein] + ATP = O-phospho-L-threonyl-[protein] + ADP + H(+). In terms of biological role, component of the EKC/KEOPS complex that is required for the formation of a threonylcarbamoyl group on adenosine at position 37 (t(6)A37) in tRNAs that read codons beginning with adenine. The complex is probably involved in the transfer of the threonylcarbamoyl moiety of threonylcarbamoyl-AMP (TC-AMP) to the N6 group of A37. TP53RK has ATPase activity in the context of the EKC/KEOPS complex and likely plays a supporting role to the catalytic subunit OSGEP. Atypical protein kinase that phosphorylates 'Ser-15' of p53/TP53 protein and may therefore participate in its activation. This Mus musculus (Mouse) protein is EKC/KEOPS complex subunit Tp53rkb.